The following is a 161-amino-acid chain: Anaerobic nitrite reductase GLB1 (161 aa).

The 149-residue stretch at 9–157 (VFTEEQEALV…LVAAIKSEMK (149 aa)) folds into the Globin domain. The Homodimerization motif lies at 42 to 46 (EIAPS). Heme b contacts are provided by S52, K66, H70, R100, and H105. The Homodimerization motif lies at 112-123 (NEHFETRFALLE).

This sequence belongs to the plant globin family. Homodimer. The cofactor is heme b. Root specific.

It localises to the cytoplasm. The protein localises to the nucleus. The catalysed reaction is Fe(III)-heme b-[protein] + nitric oxide + H2O = Fe(II)-heme b-[protein] + nitrite + 2 H(+). Its function is as follows. Phytoglobin that reduces nitrite to nitric oxide (NO) under anoxic conditions (e.g. during flooding or in waterlogged soil) and upon root nodulation. Required for general plant development and during nodulation, especially for the onset of symbiosis. Monitors nitric oxide (NO) levels during early phase of the nitrogen-fixing symbiosis and buffers oxygen in functioning nodules. May not function as an oxygen storage or transport protein. Has an unusually high affinity for O(2) through a hexacoordinate heme iron because of a very low dissociation constant. The polypeptide is Anaerobic nitrite reductase GLB1 (GLB1) (Trema tomentosum (Peach-leaf poison-bush)).